The chain runs to 448 residues: Probable D-serine dehydratase (448 aa).

Lys-111 carries the post-translational modification N6-(pyridoxal phosphate)lysine.

This sequence belongs to the serine/threonine dehydratase family. DsdA subfamily. Requires pyridoxal 5'-phosphate as cofactor.

It catalyses the reaction D-serine = pyruvate + NH4(+). The chain is Probable D-serine dehydratase from Rhizobium etli (strain CIAT 652).